We begin with the raw amino-acid sequence, 384 residues long: F-box protein At2g07140 (384 aa).

The F-box domain maps to 1 to 46; the sequence is MTLPELPKDLVEEILSFVPATSLKRLRSTCKGWNRLFKDDKRFTRI.

The chain is F-box protein At2g07140 from Arabidopsis thaliana (Mouse-ear cress).